Consider the following 392-residue polypeptide: Putative nickel insertion protein (392 aa).

It belongs to the LarC family.

The chain is Putative nickel insertion protein from Pelobacter propionicus (strain DSM 2379 / NBRC 103807 / OttBd1).